The primary structure comprises 152 residues: UPF0225 protein YchJ (152 aa).

It belongs to the UPF0225 family.

This chain is UPF0225 protein YchJ, found in Salmonella gallinarum (strain 287/91 / NCTC 13346).